We begin with the raw amino-acid sequence, 451 residues long: uncharacterized protein (451 aa).

Residues 2–60 (NVVLKQRIPLKIKRMGINGEGIGFYKKTLIFVPGALKGEEVFCQISSVRRNFAEAKLLK) enclose the TRAM domain. Positions 73, 79, 82, and 162 each coordinate [4Fe-4S] cluster. Glutamine 283, tyrosine 312, aspartate 333, and aspartate 381 together coordinate S-adenosyl-L-methionine. Catalysis depends on cysteine 408, which acts as the Nucleophile.

The protein belongs to the class I-like SAM-binding methyltransferase superfamily. RNA M5U methyltransferase family.

This is an uncharacterized protein from Streptococcus agalactiae serotype III (strain NEM316).